The primary structure comprises 100 residues: Urease subunit gamma (100 aa).

It belongs to the urease gamma subunit family. In terms of assembly, heterotrimer of UreA (gamma), UreB (beta) and UreC (alpha) subunits. Three heterotrimers associate to form the active enzyme.

The protein resides in the cytoplasm. It carries out the reaction urea + 2 H2O + H(+) = hydrogencarbonate + 2 NH4(+). Its pathway is nitrogen metabolism; urea degradation; CO(2) and NH(3) from urea (urease route): step 1/1. This Mycobacteroides abscessus (strain ATCC 19977 / DSM 44196 / CCUG 20993 / CIP 104536 / JCM 13569 / NCTC 13031 / TMC 1543 / L948) (Mycobacterium abscessus) protein is Urease subunit gamma.